The following is a 178-amino-acid chain: Extracellular fatty acid-binding protein (178 aa).

An N-terminal signal peptide occupies residues 1 to 20 (MRTLALSLALALLCLLHTEA). A21 is modified (blocked amino end (Ala)). T43 is an enterobactin binding site. Residues Y72 and K104 each coordinate 1-tetradecanoyl-sn-glycerol 3-phosphate. Residues C80 and C173 are joined by a disulfide bond. The enterobactin site is built by K104, R123, and R134. 134-136 (RLY) serves as a coordination point for 1-tetradecanoyl-sn-glycerol 3-phosphate.

It belongs to the calycin superfamily. Lipocalin family. Monomer. Post-translationally, does not seem to be glycosylated. As to expression, expressed in egg white (at protein level). Expressed in the magnum of the oviduct (at protein level). Preferentially synthesized in nonproliferating cells.

Its subcellular location is the secreted. In terms of biological role, siderocalin-like lipocalin tightly binding a variety of bacterial ferric siderophores, also binds long-chain unsaturated fatty acids such as linoleic acid, oleic acid, arachidonic acid and, with a lower affinity, long chain saturated fatty acids such as steraic acid. May act as an antibacterial factor, through dual ligand specificity, both as a siderophore-sequestrating molecule and a lysophosphatidic acid (LPA) sensor. This Gallus gallus (Chicken) protein is Extracellular fatty acid-binding protein (EXFABP).